A 1178-amino-acid chain; its full sequence is Leucine--tRNA ligase, cytoplasmic (1178 aa).

L-leucine is bound by residues Tyr54 and Tyr56. Residues 62-65 (HLGH) carry the 'HIGH' region motif. Position 169 is a phosphoserine (Ser169). The segment at 262 to 511 (GPQEYTLVKL…DAGDALIYME (250 aa)) is editing domain. Positions 596 and 599 each coordinate L-leucine. Residues 718-722 (KMSKS) carry the 'KMSKS' region motif. ATP is bound at residue Lys721. Phosphoserine is present on Ser722. N6-acetyllysine occurs at positions 972 and 1049.

This sequence belongs to the class-I aminoacyl-tRNA synthetase family.

It is found in the cytoplasm. It carries out the reaction tRNA(Leu) + L-leucine + ATP = L-leucyl-tRNA(Leu) + AMP + diphosphate. The enzyme catalyses L-methionyl-tRNA(Leu) + H2O = tRNA(Leu) + L-methionine + H(+). 5-fluoro-1,3-dihydro-1-hydroxy-1,2-benzoxaborole inhibits LARS1 by forming a covalent adduct with the 3' adenosine of tRNA(Leu) at the editing site, thus locking the enzyme in an inactive conformation. Its function is as follows. Aminoacyl-tRNA synthetase that catalyzes the specific attachment of leucine to its cognate tRNA (tRNA(Leu)). It performs tRNA aminoacylation in a two-step reaction: Leu is initially activated by ATP to form a leucyl-adenylate (Leu-AMP) intermediate; then the leucyl moiety is transferred to the acceptor 3' end of the tRNA to yield leucyl-tRNA. To improve the fidelity of catalytic reactions, it is also able to hydrolyze misactivated aminoacyl-adenylate intermediates (pre-transfer editing) and mischarged aminoacyl-tRNAs (post-transfer editing). This is Leucine--tRNA ligase, cytoplasmic (Lars1) from Mus musculus (Mouse).